The chain runs to 237 residues: Thiamine-phosphate synthase (237 aa).

4-amino-2-methyl-5-(diphosphooxymethyl)pyrimidine-binding positions include 57–61 (QLRDK) and asparagine 98. Mg(2+)-binding residues include aspartate 99 and aspartate 118. Residue serine 136 coordinates 4-amino-2-methyl-5-(diphosphooxymethyl)pyrimidine. 162 to 164 (TPT) provides a ligand contact to 2-[(2R,5Z)-2-carboxy-4-methylthiazol-5(2H)-ylidene]ethyl phosphate. Lysine 165 lines the 4-amino-2-methyl-5-(diphosphooxymethyl)pyrimidine pocket. Glycine 193 is a binding site for 2-[(2R,5Z)-2-carboxy-4-methylthiazol-5(2H)-ylidene]ethyl phosphate.

This sequence belongs to the thiamine-phosphate synthase family. It depends on Mg(2+) as a cofactor.

The enzyme catalyses 2-[(2R,5Z)-2-carboxy-4-methylthiazol-5(2H)-ylidene]ethyl phosphate + 4-amino-2-methyl-5-(diphosphooxymethyl)pyrimidine + 2 H(+) = thiamine phosphate + CO2 + diphosphate. It catalyses the reaction 2-(2-carboxy-4-methylthiazol-5-yl)ethyl phosphate + 4-amino-2-methyl-5-(diphosphooxymethyl)pyrimidine + 2 H(+) = thiamine phosphate + CO2 + diphosphate. The catalysed reaction is 4-methyl-5-(2-phosphooxyethyl)-thiazole + 4-amino-2-methyl-5-(diphosphooxymethyl)pyrimidine + H(+) = thiamine phosphate + diphosphate. The protein operates within cofactor biosynthesis; thiamine diphosphate biosynthesis; thiamine phosphate from 4-amino-2-methyl-5-diphosphomethylpyrimidine and 4-methyl-5-(2-phosphoethyl)-thiazole: step 1/1. Its function is as follows. Condenses 4-methyl-5-(beta-hydroxyethyl)thiazole monophosphate (THZ-P) and 2-methyl-4-amino-5-hydroxymethyl pyrimidine pyrophosphate (HMP-PP) to form thiamine monophosphate (TMP). The chain is Thiamine-phosphate synthase from Mycolicibacterium gilvum (strain PYR-GCK) (Mycobacterium gilvum (strain PYR-GCK)).